The primary structure comprises 883 residues: Valine--tRNA ligase (883 aa).

The 'HIGH' region signature appears at 50-60 (PNVTGKLHMGH). A 'KMSKS' region motif is present at residues 527–531 (KMSKS). K530 is an ATP binding site. Positions 811–883 (LNELIDLDEE…KQRLEQLQRA (73 aa)) form a coiled coil. Residues 859-883 (QRTKRSDFEDQLTSTKQRLEQLQRA) are disordered.

This sequence belongs to the class-I aminoacyl-tRNA synthetase family. ValS type 1 subfamily. Monomer.

It is found in the cytoplasm. The catalysed reaction is tRNA(Val) + L-valine + ATP = L-valyl-tRNA(Val) + AMP + diphosphate. Functionally, catalyzes the attachment of valine to tRNA(Val). As ValRS can inadvertently accommodate and process structurally similar amino acids such as threonine, to avoid such errors, it has a 'posttransfer' editing activity that hydrolyzes mischarged Thr-tRNA(Val) in a tRNA-dependent manner. The sequence is that of Valine--tRNA ligase from Lacticaseibacillus casei (Lactobacillus casei).